The chain runs to 433 residues: Glutamate-1-semialdehyde 2,1-aminomutase (433 aa).

The residue at position 272 (Lys272) is an N6-(pyridoxal phosphate)lysine.

The protein belongs to the class-III pyridoxal-phosphate-dependent aminotransferase family. HemL subfamily. As to quaternary structure, homodimer. It depends on pyridoxal 5'-phosphate as a cofactor.

The protein resides in the cytoplasm. The enzyme catalyses (S)-4-amino-5-oxopentanoate = 5-aminolevulinate. The protein operates within porphyrin-containing compound metabolism; protoporphyrin-IX biosynthesis; 5-aminolevulinate from L-glutamyl-tRNA(Glu): step 2/2. It functions in the pathway porphyrin-containing compound metabolism; chlorophyll biosynthesis. The polypeptide is Glutamate-1-semialdehyde 2,1-aminomutase (Synechococcus sp. (strain WH7803)).